We begin with the raw amino-acid sequence, 317 residues long: COP9 signalosome complex subunit 6b (317 aa).

Residues F11–V164 enclose the MPN domain.

It belongs to the peptidase M67A family. CSN6 subfamily. In terms of assembly, component of the CSN complex, probably composed of CSN1, CSN2, CSN3, CSN4, CSN5 (CSN5A or CSN5B), CSN6 (CSN6A or CSN6B), CSN7 and CSN8. Interacts with itself. In the complex, it probably interacts directly with CSN4, CSN5A or CSN5B, and CSN7. Binds to the translation initiation factors TIF3E1.

The protein localises to the cytoplasm. It localises to the nucleus. In terms of biological role, component of the COP9 signalosome complex (CSN), a complex involved in various cellular and developmental processes such as photomorphogenesis and auxin and jasmonate responses. The CSN complex is an essential regulator of the ubiquitin (Ubl) conjugation pathway by mediating the deneddylation of the cullin subunits of SCF-type E3 ligase complexes, leading to decrease the Ubl ligase activity of SCF. It is involved in repression of photomorphogenesis in darkness by regulating the activity of COP1-containing Ubl ligase complexes. The complex is also required for degradation of PSIAA6 by regulating the activity of the Ubl ligase SCF-TIR complex. Essential for the structural integrity of the CSN holocomplex. The sequence is that of COP9 signalosome complex subunit 6b from Arabidopsis thaliana (Mouse-ear cress).